The sequence spans 65 residues: Adrenergic toxin rho-elapitoxin-Dp1b (65 aa).

Intrachain disulfides connect Cys3-Cys24, Cys17-Cys42, Cys46-Cys57, and Cys58-Cys63.

Belongs to the three-finger toxin family. Short-chain subfamily. Aminergic toxin sub-subfamily. Expressed by the venom gland.

The protein localises to the secreted. In terms of biological role, highly potent on various alpha-adrenoceptors (ADRA) (subnanomolar affinity for ADRA1A). Order of potency is the following: ADRA1A (Ki=0.37 nM) &gt; ADRA1B (Ki=10.47 nM) &gt; ADRA1D (Ki=104.71 nM) &gt; ADRA2C (Ki=165.96 nM). Were also found to reversibly bind to muscarinic acetylcholine receptors (CHRM), but the affinity is much weaker (CHRM1, Ki=1778.28 nM; CHRM4, Ki=4466.84 nM; CHRM2, Ki=17782.79 nM). The protein is Adrenergic toxin rho-elapitoxin-Dp1b of Dendroaspis polylepis polylepis (Black mamba).